Here is a 348-residue protein sequence, read N- to C-terminus: ECA polysaccharide chain length modulation protein (348 aa).

2 consecutive transmembrane segments (helical) span residues 31–51 (FWII…TFFA) and 323–343 (AFLM…VALT).

The protein belongs to the WzzB/Cld/Rol family. In terms of assembly, probably part of a complex composed of WzxE, WzyE and WzzE.

The protein localises to the cell inner membrane. Its pathway is bacterial outer membrane biogenesis; enterobacterial common antigen biosynthesis. In terms of biological role, modulates the polysaccharide chain length of enterobacterial common antigen (ECA). In Salmonella typhimurium (strain LT2 / SGSC1412 / ATCC 700720), this protein is ECA polysaccharide chain length modulation protein.